Consider the following 226-residue polypeptide: Late expression factor 7 (226 aa).

The 50-residue stretch at 9–58 (RAKRIRLPLEIIDTILQYLDPILHAKVVGLTTRVKCRLLRDNNVEDYLKL) folds into the F-box domain.

Interacts with host S-phase kinase-associated protein 1/SKP1.

It is found in the host nucleus. The protein operates within protein degradation; proteasomal ubiquitin-dependent pathway. Its function is as follows. F-box protein that manipulates the host DNA damage response (DRR) in order to promote viral multiplication. Acts as a substrate recognition component of SKP1/Cullin/F-box (SCF) complexes for targeted protein polyubiquitination. This chain is Late expression factor 7 (LEF-7), found in Lepidoptera (butterflies and moths).